The chain runs to 647 residues: Threonine--tRNA ligase (647 aa).

The 61-residue stretch at 1–61 (MIKITFPDGA…EEDGSIEIVT (61 aa)) folds into the TGS domain. The tract at residues 240-538 (DHRKLGKELD…LIETYKGAFP (299 aa)) is catalytic. The Zn(2+) site is built by Cys-334, His-385, and His-515.

The protein belongs to the class-II aminoacyl-tRNA synthetase family. As to quaternary structure, homodimer. Requires Zn(2+) as cofactor.

Its subcellular location is the cytoplasm. It catalyses the reaction tRNA(Thr) + L-threonine + ATP = L-threonyl-tRNA(Thr) + AMP + diphosphate + H(+). Its function is as follows. Catalyzes the attachment of threonine to tRNA(Thr) in a two-step reaction: L-threonine is first activated by ATP to form Thr-AMP and then transferred to the acceptor end of tRNA(Thr). Also edits incorrectly charged L-seryl-tRNA(Thr). The sequence is that of Threonine--tRNA ligase from Streptococcus pyogenes serotype M2 (strain MGAS10270).